We begin with the raw amino-acid sequence, 167 residues long: Phosphopantetheine adenylyltransferase (167 aa).

Threonine 9 is a binding site for substrate. ATP is bound by residues threonine 9–phenylalanine 10 and histidine 17. Substrate-binding residues include lysine 41, leucine 73, and arginine 87. ATP is bound by residues glycine 88–arginine 90, glutamate 98, and tyrosine 123–threonine 129.

It belongs to the bacterial CoaD family. In terms of assembly, homohexamer. Mg(2+) is required as a cofactor.

The protein localises to the cytoplasm. The enzyme catalyses (R)-4'-phosphopantetheine + ATP + H(+) = 3'-dephospho-CoA + diphosphate. Its pathway is cofactor biosynthesis; coenzyme A biosynthesis; CoA from (R)-pantothenate: step 4/5. Its function is as follows. Reversibly transfers an adenylyl group from ATP to 4'-phosphopantetheine, yielding dephospho-CoA (dPCoA) and pyrophosphate. This is Phosphopantetheine adenylyltransferase from Bordetella avium (strain 197N).